We begin with the raw amino-acid sequence, 243 residues long: Protein-L-isoaspartate O-methyltransferase (243 aa).

S87 is a catalytic residue.

It belongs to the methyltransferase superfamily. L-isoaspartyl/D-aspartyl protein methyltransferase family.

Its subcellular location is the cytoplasm. The catalysed reaction is [protein]-L-isoaspartate + S-adenosyl-L-methionine = [protein]-L-isoaspartate alpha-methyl ester + S-adenosyl-L-homocysteine. Catalyzes the methyl esterification of L-isoaspartyl residues in peptides and proteins that result from spontaneous decomposition of normal L-aspartyl and L-asparaginyl residues. It plays a role in the repair and/or degradation of damaged proteins. This Methanosarcina mazei (strain ATCC BAA-159 / DSM 3647 / Goe1 / Go1 / JCM 11833 / OCM 88) (Methanosarcina frisia) protein is Protein-L-isoaspartate O-methyltransferase.